Reading from the N-terminus, the 104-residue chain is Turripeptide OL55 (104 aa).

Post-translationally, contains 8 disulfide bonds. In terms of tissue distribution, expressed by the venom duct.

The protein localises to the secreted. Its function is as follows. Acts as a neurotoxin by inhibiting an ion channel. The chain is Turripeptide OL55 from Iotyrris olangoensis (Sea snail).